The following is a 95-amino-acid chain: Sec-independent protein translocase protein TatA (95 aa).

The helical transmembrane segment at 1 to 21 (MFGRLGAPEIILILVVIILLF) threads the bilayer. Positions 44-55 (AKAMKSEAKADD) are enriched in basic and acidic residues. The disordered stretch occupies residues 44-95 (AKAMKSEAKADDAAPADPPNPEQSAAQRTIQAAPGDVTSSRPVTEPTDTTKR).

It belongs to the TatA/E family. In terms of assembly, the Tat system comprises two distinct complexes: a TatABC complex, containing multiple copies of TatA, TatB and TatC subunits, and a separate TatA complex, containing only TatA subunits. Substrates initially bind to the TatABC complex, which probably triggers association of the separate TatA complex to form the active translocon.

Its subcellular location is the cell membrane. Part of the twin-arginine translocation (Tat) system that transports large folded proteins containing a characteristic twin-arginine motif in their signal peptide across membranes. TatA could form the protein-conducting channel of the Tat system. This chain is Sec-independent protein translocase protein TatA, found in Streptomyces coelicolor (strain ATCC BAA-471 / A3(2) / M145).